The following is a 367-amino-acid chain: Ribosomal lysine N-methyltransferase 5 (367 aa).

The interval 55-74 (EGGRKKKRVRRRNKASSVEE) is disordered. Residues 58–68 (RKKKRVRRRNK) are compositionally biased toward basic residues. S-adenosyl-L-methionine-binding positions include tryptophan 110, 170-172 (GAG), aspartate 192, tryptophan 256, and methionine 288.

This sequence belongs to the class I-like SAM-binding methyltransferase superfamily. RKM5 family.

Its function is as follows. S-adenosyl-L-methionine-dependent protein-lysine N-methyltransferase that monomethylates 60S ribosomal protein L1 (RPL1A and RPL1B) at 'Lys-46'. In Saccharomyces cerevisiae (strain RM11-1a) (Baker's yeast), this protein is Ribosomal lysine N-methyltransferase 5 (RKM5).